The following is a 205-amino-acid chain: MTDIVWHQHSIDQAARGAQKSQNPVLLWFTGLSGAGKSTLAGALERALFDAGFHTYLLDGDNVRHGLCKDLGFSLSDRDENLRRVGEVAKLMVDAGLVVLSAFISPTRAERDRVRALFPEGRFIEVHVSTPLSVCEARDPKGLYVKARSGEIKEFTGISSPYEAPTAAELTIDTSRGDLATQVQAMLAYLTAIEVIDANKLSALA.

Residue 31–38 (GLSGAGKS) participates in ATP binding. The active-site Phosphoserine intermediate is the serine 105.

Belongs to the APS kinase family.

It catalyses the reaction adenosine 5'-phosphosulfate + ATP = 3'-phosphoadenylyl sulfate + ADP + H(+). It participates in sulfur metabolism; hydrogen sulfide biosynthesis; sulfite from sulfate: step 2/3. Catalyzes the synthesis of activated sulfate. This chain is Adenylyl-sulfate kinase, found in Shewanella denitrificans (strain OS217 / ATCC BAA-1090 / DSM 15013).